The primary structure comprises 124 residues: Small ribosomal subunit protein uS12 (124 aa).

Residues 1 to 29 (MPTINQLVRRPRRPRESANKAPALQHNPQ) form a disordered region. Asp-90 is modified (3-methylthioaspartic acid).

The protein belongs to the universal ribosomal protein uS12 family. In terms of assembly, part of the 30S ribosomal subunit. Contacts proteins S8 and S17. May interact with IF1 in the 30S initiation complex.

In terms of biological role, with S4 and S5 plays an important role in translational accuracy. Its function is as follows. Interacts with and stabilizes bases of the 16S rRNA that are involved in tRNA selection in the A site and with the mRNA backbone. Located at the interface of the 30S and 50S subunits, it traverses the body of the 30S subunit contacting proteins on the other side and probably holding the rRNA structure together. The combined cluster of proteins S8, S12 and S17 appears to hold together the shoulder and platform of the 30S subunit. This is Small ribosomal subunit protein uS12 from Anaplasma marginale (strain Florida).